The following is a 397-amino-acid chain: ATP-dependent RNA helicase eIF4A (397 aa).

The short motif at 23–51 (YKFDDLNLKPNIVRGIFGYGYETPSAIQQ) is the Q motif element. The 171-residue stretch at 54–224 (ILPITEGRDV…TKFMNNPVRI (171 aa)) folds into the Helicase ATP-binding domain. 67–74 (AQSGTGKT) serves as a coordination point for ATP. Positions 172–175 (DEAD) match the DEAD box motif. The Helicase C-terminal domain occupies 255 to 396 (DLYDSISVTQ…EMPADIGSLF (142 aa)).

Belongs to the DEAD box helicase family. eIF4A subfamily. As to quaternary structure, component of the eIF4F complex, which composition varies with external and internal environmental conditions. It is composed of at least eIF4A, eIF4E and eIF4G.

Its subcellular location is the cytoplasm. It catalyses the reaction ATP + H2O = ADP + phosphate + H(+). Functionally, ATP-dependent RNA helicase which is a subunit of the eIF4F complex involved in cap recognition and is required for mRNA binding to ribosome. In the current model of translation initiation, eIF4A unwinds RNA secondary structures in the 5'-UTR of mRNAs which is necessary to allow efficient binding of the small ribosomal subunit, and subsequent scanning for the initiator codon. The polypeptide is ATP-dependent RNA helicase eIF4A (TIF1) (Lodderomyces elongisporus (strain ATCC 11503 / CBS 2605 / JCM 1781 / NBRC 1676 / NRRL YB-4239) (Yeast)).